The sequence spans 329 residues: Biotin synthase (329 aa).

Positions 38–262 constitute a Radical SAM core domain; that stretch reads NTIQVSTLLS…IMPHSYIRLS (225 aa). 3 residues coordinate [4Fe-4S] cluster: cysteine 53, cysteine 57, and cysteine 60. Residues cysteine 97, cysteine 128, cysteine 188, and arginine 260 each contribute to the [2Fe-2S] cluster site.

Belongs to the radical SAM superfamily. Biotin synthase family. In terms of assembly, homodimer. [4Fe-4S] cluster is required as a cofactor. [2Fe-2S] cluster serves as cofactor.

It catalyses the reaction (4R,5S)-dethiobiotin + (sulfur carrier)-SH + 2 reduced [2Fe-2S]-[ferredoxin] + 2 S-adenosyl-L-methionine = (sulfur carrier)-H + biotin + 2 5'-deoxyadenosine + 2 L-methionine + 2 oxidized [2Fe-2S]-[ferredoxin]. It participates in cofactor biosynthesis; biotin biosynthesis; biotin from 7,8-diaminononanoate: step 2/2. Functionally, catalyzes the conversion of dethiobiotin (DTB) to biotin by the insertion of a sulfur atom into dethiobiotin via a radical-based mechanism. This chain is Biotin synthase, found in Acinetobacter baumannii (strain ACICU).